Reading from the N-terminus, the 1032-residue chain is Reticulon-3 (1032 aa).

The segment covering 1–24 (MAEPSAATQSHSISSSSFGAEPSA) has biased composition (low complexity). A disordered region spans residues 1–61 (MAEPSAATQS…SSSSSQPVSL (61 aa)). The residue at position 2 (Ala-2) is an N-acetylalanine. Topologically, residues 2–863 (AEPSAATQSH…KKTGFVFGTT (862 aa)) are cytoplasmic. At Ser-30 the chain carries Phosphoserine. The span at 32 to 61 (GACPALGTKSCSSSCADSFVSSSSSQPVSL) shows a compositional bias: low complexity. A phosphoserine mark is found at Ser-229, Ser-243, Ser-246, Ser-283, Ser-316, and Ser-453. Positions 545 to 568 (CEREEKTSKNFEELVSDSELHQDQ) are enriched in basic and acidic residues. Residues 545 to 617 (CEREEKTSKN…NPKLPSTVSP (73 aa)) form a disordered region. Polar residues predominate over residues 605-617 (TTENPKLPSTVSP). Phosphoserine is present on residues Ser-649 and Ser-650. The segment covering 696–715 (NESGGSEIKDIGSKYSEQSK) has biased composition (basic and acidic residues). The tract at residues 696 to 726 (NESGGSEIKDIGSKYSEQSKETNGSEPLGVF) is disordered. Ser-735 bears the Phosphoserine mark. The 189-residue stretch at 844-1032 (VHDLIFWRDV…LPGIAKKKAE (189 aa)) folds into the Reticulon domain. An intramembrane region (helical) is located at residues 864–887 (LIMLLSLAAFSVISVVSYLILALL). Residues 888 to 947 (SVTISFRIYKSVIQAVQKSEEGHPFKAYLDVDITLSSEAFHNYMNAAMVHINRALKLIIR) are Cytoplasmic-facing. The helical intramembrane region spans 948 to 968 (LFLVEDLVDSLKLAVFMWLMT). Over 969 to 972 (YVGA) the chain is Cytoplasmic. The helical intramembrane region spans 973-993 (VFNGITLLILAELLIFSVPIV). Residues 987-1032 (IFSVPIVYEKYKTQIDHYVGIARDQTKSIVEKIQAKLPGIAKKKAE) are interaction with FADD. The Cytoplasmic segment spans residues 994–1032 (YEKYKTQIDHYVGIARDQTKSIVEKIQAKLPGIAKKKAE). Residues 1000–1002 (QID) are interaction with BACE1.

Homodimer. Interacts with ATL1. Interacts with RTN4. Isoform 3 interacts with BACE1, BACE2, BCL2 and FADD. Interacts with ATL2. Interacts with TMEM33. Interacts with ZFYVE27 and with KIF5A in a ZFYVE27-dependent manner. Interacts with RIGI. Interacts with TRIM25. In terms of assembly, (Microbial infection) Interacts with Coxsackievirus A16, enterovirus 71 and poliovirus P2C proteins. As to quaternary structure, (Microbial infection) Interacts with West Nile virus protein NS4A. In terms of tissue distribution, isoform 3 is widely expressed, with highest levels in brain, where it is enriched in neuronal cell bodies from gray matter (at protein level). Three times more abundant in macula than in peripheral retina. Isoform 1 is expressed at high levels in brain and at low levels in skeletal muscle. Isoform 2 is only found in melanoma.

It localises to the endoplasmic reticulum membrane. The protein localises to the golgi apparatus membrane. In terms of biological role, may be involved in membrane trafficking in the early secretory pathway. Inhibits BACE1 activity and amyloid precursor protein processing. May induce caspase-8 cascade and apoptosis. May favor BCL2 translocation to the mitochondria upon endoplasmic reticulum stress. Induces the formation of endoplasmic reticulum tubules. Also acts as an inflammation-resolving regulator by interacting with both TRIM25 and RIGI, subsequently impairing RIGI 'Lys-63'-linked polyubiquitination leading to IRF3 and NF-kappa-B inhibition. Functionally, (Microbial infection) Plays a positive role in viral replication and pathogenesis of enteroviruses. The sequence is that of Reticulon-3 (RTN3) from Homo sapiens (Human).